The chain runs to 149 residues: Small ribosomal subunit protein uS17c (149 aa).

A chloroplast-targeting transit peptide spans 1 to 49 (MITSSLTSSLQALKLSSPFAHGSTPLSSLSKPNSFPNHRMPALVPVIRA).

This sequence belongs to the universal ribosomal protein uS17 family. Part of the 30S ribosomal subunit.

Its subcellular location is the plastid. The protein localises to the chloroplast. Functionally, one of the primary rRNA binding proteins, it binds specifically to the 5'-end of 16S ribosomal RNA. Required for optimal plastid performance in terms of photosynthesis and growth. Required for the translation of plastid mRNAs. Plays a critical role in biosynthesis of thylakoid membrane proteins encoded by chloroplast genes. This chain is Small ribosomal subunit protein uS17c (RPS17), found in Arabidopsis thaliana (Mouse-ear cress).